A 342-amino-acid polypeptide reads, in one-letter code: UDP-N-acetylglucosamine--N-acetylmuramyl-(pentapeptide) pyrophosphoryl-undecaprenol N-acetylglucosamine transferase (342 aa).

UDP-N-acetyl-alpha-D-glucosamine-binding positions include 10 to 12 (TGG), Asn-124, Ser-177, and Gln-275.

The protein belongs to the glycosyltransferase 28 family. MurG subfamily.

It localises to the cell inner membrane. The enzyme catalyses di-trans,octa-cis-undecaprenyl diphospho-N-acetyl-alpha-D-muramoyl-L-alanyl-D-glutamyl-meso-2,6-diaminopimeloyl-D-alanyl-D-alanine + UDP-N-acetyl-alpha-D-glucosamine = di-trans,octa-cis-undecaprenyl diphospho-[N-acetyl-alpha-D-glucosaminyl-(1-&gt;4)]-N-acetyl-alpha-D-muramoyl-L-alanyl-D-glutamyl-meso-2,6-diaminopimeloyl-D-alanyl-D-alanine + UDP + H(+). It functions in the pathway cell wall biogenesis; peptidoglycan biosynthesis. Its function is as follows. Cell wall formation. Catalyzes the transfer of a GlcNAc subunit on undecaprenyl-pyrophosphoryl-MurNAc-pentapeptide (lipid intermediate I) to form undecaprenyl-pyrophosphoryl-MurNAc-(pentapeptide)GlcNAc (lipid intermediate II). In Campylobacter jejuni subsp. jejuni serotype O:6 (strain 81116 / NCTC 11828), this protein is UDP-N-acetylglucosamine--N-acetylmuramyl-(pentapeptide) pyrophosphoryl-undecaprenol N-acetylglucosamine transferase.